Consider the following 290-residue polypeptide: 3-deoxy-manno-octulosonate cytidylyltransferase, mitochondrial (290 aa).

The N-terminal 50 residues, 1–50 (MSVCSSSSSSQKTWIVNGILAGTAIAAAIGARAYLGRSKKFRSRVVGIIP), are a transit peptide targeting the mitochondrion.

This sequence belongs to the KdsB family. Requires Mg(2+) as cofactor. Expressed in roots, leaves, stems and siliques.

It is found in the mitochondrion outer membrane. It catalyses the reaction 3-deoxy-alpha-D-manno-oct-2-ulosonate + CTP = CMP-3-deoxy-beta-D-manno-octulosonate + diphosphate. The protein operates within nucleotide-sugar biosynthesis; CMP-3-deoxy-D-manno-octulosonate biosynthesis; CMP-3-deoxy-D-manno-octulosonate from 3-deoxy-D-manno-octulosonate and CTP: step 1/1. Its activity is regulated as follows. Inhibited by 2beta-deoxy-Kdo. Functionally, catalyzes the production of the sugar nucleotide CMP-3-deoxy-D-manno-octulosonate (CMP-KDO). CTP is the preferred nucleotide donor, but it can partially be replaced with UTP. Activates KDO during the biosynthesis of rhamnogalacturonan II (RG-II), a structurally complex pectic polysaccharide of the primary cell wall. RG-II is essential for the cell wall integrity of rapidly growing tissues and pollen tube growth and elongation. The chain is 3-deoxy-manno-octulosonate cytidylyltransferase, mitochondrial from Arabidopsis thaliana (Mouse-ear cress).